The following is a 194-amino-acid chain: Peptidyl-tRNA hydrolase (194 aa).

Residue Tyr16 coordinates tRNA. Catalysis depends on His21, which acts as the Proton acceptor. TRNA contacts are provided by Phe67, Asn69, and Asn115.

It belongs to the PTH family. In terms of assembly, monomer.

It is found in the cytoplasm. It carries out the reaction an N-acyl-L-alpha-aminoacyl-tRNA + H2O = an N-acyl-L-amino acid + a tRNA + H(+). Functionally, hydrolyzes ribosome-free peptidyl-tRNAs (with 1 or more amino acids incorporated), which drop off the ribosome during protein synthesis, or as a result of ribosome stalling. Catalyzes the release of premature peptidyl moieties from peptidyl-tRNA molecules trapped in stalled 50S ribosomal subunits, and thus maintains levels of free tRNAs and 50S ribosomes. In Salmonella dublin (strain CT_02021853), this protein is Peptidyl-tRNA hydrolase.